The primary structure comprises 185 residues: Neuronal vesicle trafficking-associated protein 1 (185 aa).

Residues 1 to 82 are Cytoplasmic-facing; that stretch reads MVKLGNNFAE…ITEGVTERFK (82 aa). Residues 83-103 traverse the membrane as a helical; Signal-anchor for type II membrane protein segment; it reads VSVLVLFALAFLTCVVFLVVY. The Lumenal segment spans residues 104 to 185; it reads KVYKYDRACP…QETEAAEKSA (82 aa). The interval 129–164 is required for GRIP1 interaction; it reads ESYYTEQDSSAREKFYTVINHYNVAKQSITRSVSPW.

This sequence belongs to the NSG family. Forms a complex with GRIP1, GRIA2 and STX12 through direct interaction with GRIP1; controls the intracellular fate of AMPAR and the endosomal sorting of the GRIA2 subunit toward recycling and membrane targeting. Interacts with STX12. Interacts with APP; could regulate APP processing. Interacts with FAM171A1. In terms of tissue distribution, pituitary and less in adrenal gland and testis. Expressed in the hippocampus throughout development. At P0, highly and broadly expressed throughout the cortical plate, but is down-regulated overall at P8 and P14, but remains relatively enriched in layer V. At P0 is expressed ubiquitously in the developing cerebellum namely Purkinje neurons as well as granule neurons. However, it becomes restricted to Purkinje cells by P8. This exclusive expression in Purkinje cells is maintained throughout adulthood.

It localises to the membrane. It is found in the golgi apparatus. The protein resides in the trans-Golgi network membrane. Its subcellular location is the endosome membrane. The protein localises to the cell projection. It localises to the dendrite. It is found in the early endosome membrane. The protein resides in the late endosome membrane. Its subcellular location is the lysosome lumen. The protein localises to the recycling endosome membrane. It localises to the cytoplasmic vesicle membrane. It is found in the golgi stack membrane. The protein resides in the endosome. Its subcellular location is the multivesicular body membrane. The protein localises to the endoplasmic reticulum membrane. Functionally, plays a role in the recycling mechanism in neurons of multiple receptors, including AMPAR, APP and L1CAM and acts at the level of early endosomes to promote sorting of receptors toward a recycling pathway. Regulates sorting and recycling of GRIA2 through interaction with GRIP1 and then contributes to the regulation of synaptic transmission and plasticity by affecting the recycling and targeting of AMPA receptors to the synapse. Is required for faithful sorting of L1CAM to axons by facilitating trafficking from somatodendritic early endosome or the recycling endosome. In an other hand, induces apoptosis via the activation of CASP3 in response to DNA damage. This Mus musculus (Mouse) protein is Neuronal vesicle trafficking-associated protein 1.